The following is a 393-amino-acid chain: Lipid-A-disaccharide synthase (393 aa).

The protein belongs to the LpxB family.

The enzyme catalyses a lipid X + a UDP-2-N,3-O-bis[(3R)-3-hydroxyacyl]-alpha-D-glucosamine = a lipid A disaccharide + UDP + H(+). It participates in bacterial outer membrane biogenesis; LPS lipid A biosynthesis. In terms of biological role, condensation of UDP-2,3-diacylglucosamine and 2,3-diacylglucosamine-1-phosphate to form lipid A disaccharide, a precursor of lipid A, a phosphorylated glycolipid that anchors the lipopolysaccharide to the outer membrane of the cell. This Bordetella pertussis (strain Tohama I / ATCC BAA-589 / NCTC 13251) protein is Lipid-A-disaccharide synthase.